We begin with the raw amino-acid sequence, 366 residues long: Neuropeptide Y receptor type 1 (366 aa).

Topologically, residues M1–A39 are extracellular. N-linked (GlcNAc...) asparagine glycans are attached at residues N2, N9, and N15. The chain crosses the membrane as a helical span at residues L40–I60. At L61 to L82 the chain is on the cytoplasmic side. Residues L83 to F103 traverse the membrane as a helical segment. At G104–N111 the chain is on the extracellular side. Residues C108 and C193 are joined by a disulfide bond. A helical membrane pass occupies residues E112 to E132. The Cytoplasmic portion of the chain corresponds to R133–H149. A helical transmembrane segment spans residues A150–M170. The Extracellular portion of the chain corresponds to Y171 to R203. The N-linked (GlcNAc...) asparagine glycan is linked to N181. The helical transmembrane segment at L204–V224 threads the bilayer. Residues C225 to L260 are Cytoplasmic-facing. The chain crosses the membrane as a helical span at residues L261 to F281. Residues D282 to N294 lie on the Extracellular side of the membrane. A helical transmembrane segment spans residues L295–Y315. Over G316–A366 the chain is Cytoplasmic. The S-palmitoyl cysteine moiety is linked to residue C333.

Belongs to the G-protein coupled receptor 1 family.

The protein resides in the cell membrane. Its function is as follows. Receptor for neuropeptide Y and peptide YY. The protein is Neuropeptide Y receptor type 1 (npy1r) of Xenopus laevis (African clawed frog).